Here is a 188-residue protein sequence, read N- to C-terminus: PRA1 family protein F4 (188 aa).

Positions 1–13 (MANNDEITTSSHA) are enriched in polar residues. Positions 1-25 (MANNDEITTSSHASPAVNHESISRA) are disordered. Helical transmembrane passes span 67–86 (YFRS…SLIW), 90–107 (SLIV…LYFL), 119–139 (IDDR…LLLT), and 142–162 (TFNI…HAVI).

This sequence belongs to the PRA1 family.

The protein localises to the endosome membrane. Its function is as follows. May be involved in both secretory and endocytic intracellular trafficking in the endosomal/prevacuolar compartments. This is PRA1 family protein F4 (PRA1F4) from Arabidopsis thaliana (Mouse-ear cress).